The primary structure comprises 438 residues: Na(+)/H(+) antiporter NhaA 2 (438 aa).

The next 11 helical transmembrane spans lie at 21-41, 66-86, 102-122, 130-150, 160-180, 183-203, 206-226, 308-328, 341-361, 376-396, and 410-430; these read SGGIVLLGATVLALVLANSPW, LHHWINDGLMAVFFFLVGLEL, MLPIAAAFGGMLVPALIFHFI, KGWGIPMATDIAFALGVLALL, IFLTALAIVDDLGAVLVIALF, GELAVGKLLVALVLLLILIAG, LGVQSLNFYGLLGFCLWVVLL, WVIFGVIPIFALANAGLVLQL, LGVALGLLLGKPLGILFFSWI, WMDVFGVGILGGIGFTMSLFI, and AKLGIFIASMLAGAAGFTVLS.

It belongs to the NhaA Na(+)/H(+) (TC 2.A.33) antiporter family.

The protein resides in the cell inner membrane. It carries out the reaction Na(+)(in) + 2 H(+)(out) = Na(+)(out) + 2 H(+)(in). In terms of biological role, na(+)/H(+) antiporter that extrudes sodium in exchange for external protons. The sequence is that of Na(+)/H(+) antiporter NhaA 2 from Syntrophotalea carbinolica (strain DSM 2380 / NBRC 103641 / GraBd1) (Pelobacter carbinolicus).